The chain runs to 129 residues: Small ribosomal subunit protein uS8 (129 aa).

The protein belongs to the universal ribosomal protein uS8 family. In terms of assembly, part of the 30S ribosomal subunit.

One of the primary rRNA binding proteins, it binds directly to 16S rRNA central domain where it helps coordinate assembly of the platform of the 30S subunit. In Thermoplasma volcanium (strain ATCC 51530 / DSM 4299 / JCM 9571 / NBRC 15438 / GSS1), this protein is Small ribosomal subunit protein uS8.